A 92-amino-acid chain; its full sequence is Small ribosomal subunit protein uS19 (92 aa).

This sequence belongs to the universal ribosomal protein uS19 family.

Functionally, protein S19 forms a complex with S13 that binds strongly to the 16S ribosomal RNA. This is Small ribosomal subunit protein uS19 from Bifidobacterium adolescentis (strain ATCC 15703 / DSM 20083 / NCTC 11814 / E194a).